We begin with the raw amino-acid sequence, 893 residues long: MFPLRDTEMGASTFFASALPHDVCGSNGLPLTPNSIKILGRFQILKTITHPRLCQYVDITRGKHERLVVAAEHCENSLEDLLREGKLVSSSRILCIAYEVLQGLQYMNKHGMVHRALSPRNILLDRKGHVKLAKFGLYHMTAQGVDVDFPIGYPSYLAPEVIAQGMVKPSDHTQCEKPLPSGPKSDLWSLGIILFELCVGRKLFQTLEIAERLKFVITLGYVDDIVTVLAEEHGCLDIIKDLSENVITLLKKCLTFQPSKRPTPEELMHDHLFSEVSLTYPPFHKPAGLFSSSPRCADLTLPEDISQLCKDEDNDYLAERSIEEVYYLWCLAGGDLEKELVNKEIIRSKPPVCTLPNFVLEDGESFGQGRDRSSLLDDTTVTLSLCQLRNRLKDVGGEAFYPLLEDDQSTLPHSNSSSELSAAANLPLIIRERDTEYQLNRIVLFDRLLKAYPYKKNQIWKEARVDIPPLLRGITWAALLGVEGAIQAKYDAIDKDTPIPTDRQIEVDIPRCHQYDELLSSPEGHAKFRRVLKAWVVSHPDLVYWQGLDSLCAPFLYLNFNNEALAYACMSAFIPKYLYNFFLKDNSHVIQEYLTVFSQMIAFHDPELSNHLNEIGFIPDLYAIPWFLTMFTHVFPLHKIFHLWDTLLLGNSSFPFCIGVAILQQLRDRLLANGFNECILLFSDLPEIDIERCVRESINLFRWTPKSATYRQYAQPPRQANESNGTRSSMSCFSVDYQEAPRGDLSRDSIKLDDLKAEVSPRISAEDLIDLCELTGPSHSKTPIKKTKSSKPKLLVVDIRNSEDFNRGHISGSINVPFASAFTAEGDLIQCPATATLQSFKGRVVVIVGNAVKNTAAFAAHLVKSKYPRVCILDGGINKIKPTGLLTVPSPQI.

Residues 1-274 (MFPLRDTEMG…EELMHDHLFS (274 aa)) form the Protein kinase domain. The 186-residue stretch at 466 to 651 (DIPPLLRGIT…HLWDTLLLGN (186 aa)) folds into the Rab-GAP TBC domain. The Rhodanese domain maps to 790 to 889 (SKPKLLVVDI…IKPTGLLTVP (100 aa)).

Belongs to the protein kinase superfamily. In terms of assembly, component of the FERRY complex.

It localises to the cytoplasm. The protein resides in the cytoskeleton. Its subcellular location is the spindle. The protein localises to the midbody. It is found in the early endosome. Its function is as follows. Component of the FERRY complex (Five-subunit Endosomal Rab5 and RNA/ribosome intermediary). The FERRY complex directly interacts with mRNAs and RAB5A, and functions as a RAB5A effector involved in the localization and the distribution of specific mRNAs most likely by mediating their endosomal transport. The complex recruits mRNAs and ribosomes to early endosomes through direct mRNA-interaction. Also involved in the modulation of mTOR signaling and expression of mTOR complex components. Involved in the control of actin-cytoskeleton organization. This is TBC domain-containing protein kinase-like protein from Gallus gallus (Chicken).